The chain runs to 353 residues: MTIALGRFTKEENDLFDIMDDWLRRDRFVFVGWSGLLLFPCAYFALGGWFTGTTFVTSWYTHGLASSYLEGCNFLTAAVSTPANSLAHSLLLLWGPEAQGDFTRWCQLGGLWTFVALHGAFGLIGFMLRQFELARSVQLRPYNAIAFSGPIAVFVSVFLIYPLGQSGWFFAPSFGVAAIFRFILFFQGFHNWTLNPFHMMGVAGVLGAALLCAIHGATVENTLFEDGDGANTFRAFNPTQAEETYSMVTANRFWSQIFGVAFSNKRWLHFFMLFVPVTGLWMSALGVVGLALNLRAYDFVSQEIRAAEDPEFETFYTKNILLNEGIRAWMAAQDQPHENLIFPEEVLPRGNAL.

Thr-2 bears the N-acetylthreonine mark. The residue at position 2 (Thr-2) is a Phosphothreonine. Residues 41–61 (CAYFALGGWFTGTTFVTSWYT) form a helical membrane-spanning segment. His-118 is a binding site for chlorophyll a. Residues 125 to 141 (GFMLRQFELARSVQLRP) traverse the membrane as a helical segment. The pheophytin a site is built by Gln-130 and Asn-143. A helical membrane pass occupies residues 153-166 (VFVSVFLIYPLGQS). His-198 contacts chlorophyll a. Residues 208 to 228 (AALLCAIHGATVENTLFEDGD) form a helical membrane-spanning segment. A plastoquinone is bound by residues His-215 and Phe-262. His-215 contacts Fe cation. His-269 is a binding site for Fe cation. A helical membrane pass occupies residues 279–295 (GLWMSALGVVGLALNLR).

Belongs to the reaction center PufL/M/PsbA/D family. As to quaternary structure, PSII is composed of 1 copy each of membrane proteins PsbA, PsbB, PsbC, PsbD, PsbE, PsbF, PsbH, PsbI, PsbJ, PsbK, PsbL, PsbM, PsbT, PsbX, PsbY, PsbZ, Psb30/Ycf12, at least 3 peripheral proteins of the oxygen-evolving complex and a large number of cofactors. It forms dimeric complexes. The D1/D2 heterodimer binds P680, chlorophylls that are the primary electron donor of PSII, and subsequent electron acceptors. It shares a non-heme iron and each subunit binds pheophytin, quinone, additional chlorophylls, carotenoids and lipids. There is also a Cl(-1) ion associated with D1 and D2, which is required for oxygen evolution. The PSII complex binds additional chlorophylls, carotenoids and specific lipids. serves as cofactor.

The protein resides in the plastid. Its subcellular location is the chloroplast thylakoid membrane. The catalysed reaction is 2 a plastoquinone + 4 hnu + 2 H2O = 2 a plastoquinol + O2. In terms of biological role, photosystem II (PSII) is a light-driven water:plastoquinone oxidoreductase that uses light energy to abstract electrons from H(2)O, generating O(2) and a proton gradient subsequently used for ATP formation. It consists of a core antenna complex that captures photons, and an electron transfer chain that converts photonic excitation into a charge separation. The D1/D2 (PsbA/PsbD) reaction center heterodimer binds P680, the primary electron donor of PSII as well as several subsequent electron acceptors. D2 is needed for assembly of a stable PSII complex. This is Photosystem II D2 protein from Nymphaea alba (White water-lily).